A 207-amino-acid polypeptide reads, in one-letter code: ATP-dependent Clp protease proteolytic subunit 2 (207 aa).

The Nucleophile role is filled by Ser-102. Residue His-127 is part of the active site.

It belongs to the peptidase S14 family. As to quaternary structure, fourteen ClpP subunits assemble into 2 heptameric rings which stack back to back to give a disk-like structure with a central cavity, resembling the structure of eukaryotic proteasomes.

The protein resides in the cytoplasm. The enzyme catalyses Hydrolysis of proteins to small peptides in the presence of ATP and magnesium. alpha-casein is the usual test substrate. In the absence of ATP, only oligopeptides shorter than five residues are hydrolyzed (such as succinyl-Leu-Tyr-|-NHMec, and Leu-Tyr-Leu-|-Tyr-Trp, in which cleavage of the -Tyr-|-Leu- and -Tyr-|-Trp bonds also occurs).. In terms of biological role, cleaves peptides in various proteins in a process that requires ATP hydrolysis. Has a chymotrypsin-like activity. Plays a major role in the degradation of misfolded proteins. The chain is ATP-dependent Clp protease proteolytic subunit 2 from Bifidobacterium longum (strain NCC 2705).